Here is a 741-residue protein sequence, read N- to C-terminus: DNA ligase (741 aa).

NAD(+) is bound by residues 78-82, 127-128, and Glu-161; these read DADYD and SL. Lys-163 functions as the N6-AMP-lysine intermediate in the catalytic mechanism. Residues Arg-184, Glu-219, Lys-335, and Lys-359 each contribute to the NAD(+) site. 4 residues coordinate Zn(2+): Cys-464, Cys-467, Cys-482, and Cys-488. The BRCT domain maps to 662–741; the sequence is VGDSPVAGKT…DAWRVLAGLA (80 aa).

Belongs to the NAD-dependent DNA ligase family. LigA subfamily. It depends on Mg(2+) as a cofactor. The cofactor is Mn(2+).

The enzyme catalyses NAD(+) + (deoxyribonucleotide)n-3'-hydroxyl + 5'-phospho-(deoxyribonucleotide)m = (deoxyribonucleotide)n+m + AMP + beta-nicotinamide D-nucleotide.. Its function is as follows. DNA ligase that catalyzes the formation of phosphodiester linkages between 5'-phosphoryl and 3'-hydroxyl groups in double-stranded DNA using NAD as a coenzyme and as the energy source for the reaction. It is essential for DNA replication and repair of damaged DNA. The chain is DNA ligase from Dinoroseobacter shibae (strain DSM 16493 / NCIMB 14021 / DFL 12).